Consider the following 375-residue polypeptide: Tubulinyl-Tyr carboxypeptidase 1 (375 aa).

Residues 1-33 (MPGGKKVVPSGSSSASPNAAATTTAAAAAAAAA) are compositionally biased toward low complexity. A disordered region spans residues 1-69 (MPGGKKVVPS…EEDLRDGGVP (69 aa)). Positions 53–63 (EEPEEEGEEDL) are enriched in acidic residues. Residues C179, H214, and S231 contribute to the active site. Residues 309-375 (RDMRLKIGKG…PDLSGYQIRV (67 aa)) are disordered. An involved in heparin-binding and antiangiogenic activity region spans residues 329-375 (KKDVSSPQRAQSSPHRRNSRSERRPSGEKKPAEPKAMPDLSGYQIRV). Over residues 347–361 (SRSERRPSGEKKPAE) the composition is skewed to basic and acidic residues.

The protein belongs to the transglutaminase-like superfamily. Vasohibin family. In terms of assembly, interacts with SVBP; interaction enhances VASH1 tyrosine carboxypeptidase activity. Ubiquitinated in vitro. Expressed at low level in proliferating endothelial cells at the sprouting front but highly expressed in nonproliferating endothelial cells in the termination zone.

It localises to the cytoplasm. The protein localises to the secreted. It catalyses the reaction C-terminal L-alpha-aminoacyl-L-glutamyl-L-glutamyl-L-tyrosyl-[tubulin] + H2O = C-terminal L-alpha-aminoacyl-L-glutamyl-L-glutamyl-[tubulin] + L-tyrosine. In terms of biological role, tyrosine carboxypeptidase that removes the C-terminal tyrosine residue of alpha-tubulin, thereby regulating microtubule dynamics and function. Acts as an angiogenesis inhibitor: inhibits migration, proliferation and network formation by endothelial cells as well as angiogenesis. This inhibitory effect is selective to endothelial cells as it does not affect the migration of smooth muscle cells or fibroblasts. The chain is Tubulinyl-Tyr carboxypeptidase 1 from Mus musculus (Mouse).